The primary structure comprises 507 residues: Maturase K (507 aa).

It belongs to the intron maturase 2 family. MatK subfamily.

It is found in the plastid. The protein resides in the chloroplast. Its function is as follows. Usually encoded in the trnK tRNA gene intron. Probably assists in splicing its own and other chloroplast group II introns. This Ranunculus macranthus (Large buttercup) protein is Maturase K.